We begin with the raw amino-acid sequence, 323 residues long: Ferrochelatase (323 aa).

Fe cation-binding residues include H195 and E276.

Belongs to the ferrochelatase family.

It is found in the cytoplasm. The catalysed reaction is heme b + 2 H(+) = protoporphyrin IX + Fe(2+). It functions in the pathway porphyrin-containing compound metabolism; protoheme biosynthesis; protoheme from protoporphyrin-IX: step 1/1. Functionally, catalyzes the ferrous insertion into protoporphyrin IX. This is Ferrochelatase from Mannheimia succiniciproducens (strain KCTC 0769BP / MBEL55E).